A 294-amino-acid chain; its full sequence is tRNA dimethylallyltransferase (294 aa).

10-17 (GITASGKS) is an ATP binding site. 12–17 (TASGKS) is a binding site for substrate. The interaction with substrate tRNA stretch occupies residues 36-39 (DSKQ).

Belongs to the IPP transferase family. Monomer. Mg(2+) is required as a cofactor.

The enzyme catalyses adenosine(37) in tRNA + dimethylallyl diphosphate = N(6)-dimethylallyladenosine(37) in tRNA + diphosphate. Functionally, catalyzes the transfer of a dimethylallyl group onto the adenine at position 37 in tRNAs that read codons beginning with uridine, leading to the formation of N6-(dimethylallyl)adenosine (i(6)A). The chain is tRNA dimethylallyltransferase from Wolbachia sp. subsp. Drosophila simulans (strain wRi).